A 551-amino-acid chain; its full sequence is Probable NADH-ubiquinone oxidoreductase C947.15c, mitochondrial (551 aa).

A mitochondrion-targeting transit peptide spans 1–35 (MSVSKARLQSVVRLSRTVPYSKTMVRSFHVSCAVK). 92–122 (NIVVLGSGWGAVAAIKNLDPSLYNITLVSPR) serves as a coordination point for FAD. 255–291 (LHITVVGGGPTGMEFAAEMQDFIDNDVKDMFPELQKD) is a binding site for NAD(+).

It belongs to the NADH dehydrogenase family.

The protein localises to the mitochondrion. It carries out the reaction a quinone + NADH + H(+) = a quinol + NAD(+). The catalysed reaction is a ubiquinone + NADH + H(+) = a ubiquinol + NAD(+). In terms of biological role, catalyzes the oxidation of NADH. The protein is Probable NADH-ubiquinone oxidoreductase C947.15c, mitochondrial of Schizosaccharomyces pombe (strain 972 / ATCC 24843) (Fission yeast).